The chain runs to 359 residues: uncharacterized protein (359 aa).

This is an uncharacterized protein from Archaeoglobus fulgidus (strain ATCC 49558 / DSM 4304 / JCM 9628 / NBRC 100126 / VC-16).